The chain runs to 270 residues: Acyl-[acyl-carrier-protein]--UDP-N-acetylglucosamine O-acyltransferase (270 aa).

Belongs to the transferase hexapeptide repeat family. LpxA subfamily. In terms of assembly, homotrimer.

It localises to the cytoplasm. It catalyses the reaction a (3R)-hydroxyacyl-[ACP] + UDP-N-acetyl-alpha-D-glucosamine = a UDP-3-O-[(3R)-3-hydroxyacyl]-N-acetyl-alpha-D-glucosamine + holo-[ACP]. It functions in the pathway glycolipid biosynthesis; lipid IV(A) biosynthesis; lipid IV(A) from (3R)-3-hydroxytetradecanoyl-[acyl-carrier-protein] and UDP-N-acetyl-alpha-D-glucosamine: step 1/6. In terms of biological role, involved in the biosynthesis of lipid A, a phosphorylated glycolipid that anchors the lipopolysaccharide to the outer membrane of the cell. This is Acyl-[acyl-carrier-protein]--UDP-N-acetylglucosamine O-acyltransferase from Helicobacter pylori (strain P12).